Reading from the N-terminus, the 251-residue chain is 5'-nucleotidase SurE (251 aa).

Residues Asp8, Asp9, Ser39, and Asn91 each contribute to the a divalent metal cation site.

The protein belongs to the SurE nucleotidase family. A divalent metal cation is required as a cofactor.

It localises to the cytoplasm. The enzyme catalyses a ribonucleoside 5'-phosphate + H2O = a ribonucleoside + phosphate. In terms of biological role, nucleotidase that shows phosphatase activity on nucleoside 5'-monophosphates. This Methylococcus capsulatus (strain ATCC 33009 / NCIMB 11132 / Bath) protein is 5'-nucleotidase SurE.